Here is a 108-residue protein sequence, read N- to C-terminus: T-cell acute lymphocytic leukemia protein 2 homolog (108 aa).

Residues 2–54 (TRKIFTNTRERWRQQSVNNAFAKLRKLIPTHPPDKKLSKNETLRLAMRYINFL) form the bHLH domain. The segment at 76–108 (GLFPPKTRLPDEDDRTLLNDYRVPSPGPSHGAP) is disordered.

In Mus musculus (Mouse), this protein is T-cell acute lymphocytic leukemia protein 2 homolog (Tal2).